A 421-amino-acid chain; its full sequence is UDP-N-acetylglucosamine 1-carboxyvinyltransferase 1 (421 aa).

Residue 22 to 23 (KN) participates in phosphoenolpyruvate binding. Position 95 (Arg95) interacts with UDP-N-acetyl-alpha-D-glucosamine. Cys119 acts as the Proton donor in catalysis. A 2-(S-cysteinyl)pyruvic acid O-phosphothioketal modification is found at Cys119. UDP-N-acetyl-alpha-D-glucosamine-binding positions include 124–128 (RPIEQ), Asp308, and Val330.

It belongs to the EPSP synthase family. MurA subfamily.

The protein localises to the cytoplasm. It carries out the reaction phosphoenolpyruvate + UDP-N-acetyl-alpha-D-glucosamine = UDP-N-acetyl-3-O-(1-carboxyvinyl)-alpha-D-glucosamine + phosphate. The protein operates within cell wall biogenesis; peptidoglycan biosynthesis. Cell wall formation. Adds enolpyruvyl to UDP-N-acetylglucosamine. The chain is UDP-N-acetylglucosamine 1-carboxyvinyltransferase 1 from Staphylococcus aureus (strain bovine RF122 / ET3-1).